The chain runs to 510 residues: Crotonobetaine/carnitine--CoA ligase (510 aa).

It belongs to the ATP-dependent AMP-binding enzyme family.

The enzyme catalyses 4-(trimethylamino)butanoate + ATP + CoA = 4-(trimethylamino)butanoyl-CoA + AMP + diphosphate. It catalyses the reaction crotonobetaine + ATP + CoA = crotonobetainyl-CoA + AMP + diphosphate. The catalysed reaction is (R)-carnitine + ATP + CoA = (R)-carnitinyl-CoA + AMP + diphosphate. It functions in the pathway amine and polyamine metabolism; carnitine metabolism. Its function is as follows. Catalyzes the transfer of CoA to carnitine, generating the initial carnitinyl-CoA needed for the CaiB reaction cycle. Also has activity toward crotonobetaine and gamma-butyrobetaine. This chain is Crotonobetaine/carnitine--CoA ligase, found in Shigella flexneri serotype 5b (strain 8401).